A 150-amino-acid chain; its full sequence is Small ribosomal subunit protein bS6 (150 aa).

Residues 99–150 are disordered; that stretch reads GPSAMLQKRDRDDRGERGERGFGGGGFGGGRDREDRPRRGRDREEAATEETF. Basic and acidic residues-rich tracts occupy residues 105 to 118 and 128 to 144; these read QKRD…RGER and GRDR…REEA.

The protein belongs to the bacterial ribosomal protein bS6 family.

Its function is as follows. Binds together with bS18 to 16S ribosomal RNA. This chain is Small ribosomal subunit protein bS6, found in Azorhizobium caulinodans (strain ATCC 43989 / DSM 5975 / JCM 20966 / LMG 6465 / NBRC 14845 / NCIMB 13405 / ORS 571).